The primary structure comprises 208 residues: NAD(P)H-quinone oxidoreductase subunit I (208 aa).

2 consecutive 4Fe-4S ferredoxin-type domains span residues 55-84 (GRIHYEFDKCIACEVCVRVCPINLPVVDWV) and 95-124 (RNYSIDFGVCIFCGNCVEYCPTNCLSMTEE). [4Fe-4S] cluster-binding residues include Cys64, Cys67, Cys70, Cys74, Cys104, Cys107, Cys110, and Cys114.

This sequence belongs to the complex I 23 kDa subunit family. In terms of assembly, NDH-1 is composed of at least 11 different subunits. Requires [4Fe-4S] cluster as cofactor.

Its subcellular location is the cellular thylakoid membrane. It catalyses the reaction a plastoquinone + NADH + (n+1) H(+)(in) = a plastoquinol + NAD(+) + n H(+)(out). It carries out the reaction a plastoquinone + NADPH + (n+1) H(+)(in) = a plastoquinol + NADP(+) + n H(+)(out). Functionally, NDH-1 shuttles electrons from an unknown electron donor, via FMN and iron-sulfur (Fe-S) centers, to quinones in the respiratory and/or the photosynthetic chain. The immediate electron acceptor for the enzyme in this species is believed to be plastoquinone. Couples the redox reaction to proton translocation, and thus conserves the redox energy in a proton gradient. The sequence is that of NAD(P)H-quinone oxidoreductase subunit I from Prochlorococcus marinus (strain AS9601).